We begin with the raw amino-acid sequence, 101 residues long: 2-amino-4-ketopentanoate thiolase alpha subunit (101 aa).

It belongs to the OrtA family. As to quaternary structure, heterodimer with OrtB.

The catalysed reaction is D-alanine + acetyl-CoA = (2R)-2-amino-4-oxopentanoate + CoA. Its activity is regulated as follows. Completely inhibited by p-chloromercuribenzoate (p-ClHgBzO) and acetyl-CoA, and partially inhibited by N-ethylmaleimide. Involved in the ornithine fermentation pathway. Catalyzes the thiolytic cleavage of 2-amino-4-ketopentanoate (AKP) with coenzyme A (CoA) to form acetyl-CoA and alanine. It is strictly specific for AKP. The sequence is that of 2-amino-4-ketopentanoate thiolase alpha subunit from Acetoanaerobium sticklandii (strain ATCC 12662 / DSM 519 / JCM 1433 / CCUG 9281 / NCIMB 10654 / HF) (Clostridium sticklandii).